A 1381-amino-acid polypeptide reads, in one-letter code: DNA-directed RNA polymerase subunit beta'' (1381 aa).

Zn(2+) is bound by residues Cys-224, Cys-295, Cys-302, and Cys-305.

The protein belongs to the RNA polymerase beta' chain family. RpoC2 subfamily. As to quaternary structure, in plastids the minimal PEP RNA polymerase catalytic core is composed of four subunits: alpha, beta, beta', and beta''. When a (nuclear-encoded) sigma factor is associated with the core the holoenzyme is formed, which can initiate transcription. Requires Zn(2+) as cofactor.

The protein localises to the plastid. The protein resides in the chloroplast. It catalyses the reaction RNA(n) + a ribonucleoside 5'-triphosphate = RNA(n+1) + diphosphate. Functionally, DNA-dependent RNA polymerase catalyzes the transcription of DNA into RNA using the four ribonucleoside triphosphates as substrates. The polypeptide is DNA-directed RNA polymerase subunit beta'' (Lactuca sativa (Garden lettuce)).